The primary structure comprises 84 residues: Putative membrane protein insertion efficiency factor (84 aa).

Belongs to the UPF0161 family.

The protein resides in the cell inner membrane. Functionally, could be involved in insertion of integral membrane proteins into the membrane. The protein is Putative membrane protein insertion efficiency factor of Shewanella frigidimarina (strain NCIMB 400).